A 330-amino-acid polypeptide reads, in one-letter code: Exostosin-like 2 (330 aa).

Over 1–21 the chain is Cytoplasmic; the sequence is MMRGCHICKLPGRVMGIRVLR. A helical; Signal-anchor for type II membrane protein membrane pass occupies residues 22–42; it reads FSLVVILVLLLVAGALTNLLP. Residues 43-330 lie on the Lumenal side of the membrane; that stretch reads NIKEDKMLTL…FPYANHKSKM (288 aa). Glutamine 72 contributes to the UDP-N-acetyl-alpha-D-galactosamine binding site. Glutamine 72 contacts UDP-N-acetyl-alpha-D-glucosamine. A glycan (N-linked (GlcNAc...) asparagine) is linked at asparagine 75. UDP-N-acetyl-alpha-D-galactosamine is bound by residues arginine 76, asparagine 101, asparagine 130, arginine 135, aspartate 151, aspartate 152, aspartate 153, and aspartate 245. Positions 76, 101, 130, 135, 151, 152, 153, 245, 246, and 293 each coordinate UDP-N-acetyl-alpha-D-glucosamine. Aspartate 153 lines the Mn(2+) pocket. Cysteine 244 and cysteine 296 form a disulfide bridge. Aspartate 246 is an active-site residue. Arginine 293 contacts UDP-N-acetyl-alpha-D-galactosamine.

Belongs to the glycosyltransferase 47 family. Mn(2+) serves as cofactor.

It is found in the endoplasmic reticulum membrane. It carries out the reaction 3-O-(beta-D-GlcA-(1-&gt;3)-beta-D-Gal-(1-&gt;3)-beta-D-Gal-(1-&gt;4)-beta-D-Xyl)-L-seryl-[protein] + UDP-N-acetyl-alpha-D-glucosamine = 3-O-(alpha-D-GlcNAc-(1-&gt;4)-beta-D-GlcA-(1-&gt;3)-beta-D-Gal-(1-&gt;3)-beta-D-Gal-(1-&gt;4)-beta-D-Xyl)-L-seryl-[protein] + UDP + H(+). Its function is as follows. Glycosyltransferase required for the biosynthesis of heparan-sulfate and responsible for the alternating addition of beta-1-4-linked glucuronic acid (GlcA) and alpha-1-4-linked N-acetylglucosamine (GlcNAc) units to nascent heparan sulfate chains. The chain is Exostosin-like 2 (Extl2) from Mus musculus (Mouse).